The sequence spans 492 residues: ATP synthase subunit beta, chloroplastic (492 aa).

Residue 170–177 coordinates ATP; it reads GGAGVGKT.

It belongs to the ATPase alpha/beta chains family. As to quaternary structure, F-type ATPases have 2 components, CF(1) - the catalytic core - and CF(0) - the membrane proton channel. CF(1) has five subunits: alpha(3), beta(3), gamma(1), delta(1), epsilon(1). CF(0) has four main subunits: a(1), b(1), b'(1) and c(9-12).

The protein localises to the plastid. Its subcellular location is the chloroplast thylakoid membrane. It carries out the reaction ATP + H2O + 4 H(+)(in) = ADP + phosphate + 5 H(+)(out). In terms of biological role, produces ATP from ADP in the presence of a proton gradient across the membrane. The catalytic sites are hosted primarily by the beta subunits. This Marchantia polymorpha (Common liverwort) protein is ATP synthase subunit beta, chloroplastic.